Here is a 753-residue protein sequence, read N- to C-terminus: Ion-translocating oxidoreductase complex subunit C (753 aa).

2 consecutive 4Fe-4S ferredoxin-type domains span residues 367–397 (EMGEPQEEKGCIRCSACADACPADLLPQQLY) and 407–436 (KATAHNLADCIECGACAWVCPSNIPLVQYF). Residues Cys377, Cys380, Cys383, Cys387, Cys416, Cys419, Cys422, and Cys426 each coordinate [4Fe-4S] cluster. Disordered stretches follow at residues 517-561 (AKPD…RKAA), 606-625 (RKAEQQVAPVEAPVAEPVDP), 640-659 (RKAEQQVAPVEAPVAEPVDP), and 705-735 (AKARKAEQQAAQPDLASAAANDDPRKAAVAA). The span at 526–537 (AAREARKAEARA) shows a compositional bias: basic and acidic residues. Low complexity-rich tracts occupy residues 610–622 (QQVAPVEAPVAEP), 644–656 (QQVAPVEAPVAEP), and 712–735 (QQAAQPDLASAAANDDPRKAAVAA).

Belongs to the 4Fe4S bacterial-type ferredoxin family. RnfC subfamily. As to quaternary structure, the complex is composed of six subunits: RnfA, RnfB, RnfC, RnfD, RnfE and RnfG. The cofactor is [4Fe-4S] cluster.

Its subcellular location is the cell inner membrane. In terms of biological role, part of a membrane-bound complex that couples electron transfer with translocation of ions across the membrane. The chain is Ion-translocating oxidoreductase complex subunit C from Klebsiella pneumoniae (strain 342).